Consider the following 379-residue polypeptide: UDP-4-amino-4-deoxy-L-arabinose--oxoglutarate aminotransferase (379 aa).

K183 is subject to N6-(pyridoxal phosphate)lysine.

It belongs to the DegT/DnrJ/EryC1 family. ArnB subfamily. In terms of assembly, homodimer. Pyridoxal 5'-phosphate is required as a cofactor.

The catalysed reaction is UDP-4-amino-4-deoxy-beta-L-arabinose + 2-oxoglutarate = UDP-beta-L-threo-pentopyranos-4-ulose + L-glutamate. The protein operates within nucleotide-sugar biosynthesis; UDP-4-deoxy-4-formamido-beta-L-arabinose biosynthesis; UDP-4-deoxy-4-formamido-beta-L-arabinose from UDP-alpha-D-glucuronate: step 2/3. Its pathway is bacterial outer membrane biogenesis; lipopolysaccharide biosynthesis. Its function is as follows. Catalyzes the conversion of UDP-4-keto-arabinose (UDP-Ara4O) to UDP-4-amino-4-deoxy-L-arabinose (UDP-L-Ara4N). The modified arabinose is attached to lipid A and is required for resistance to polymyxin and cationic antimicrobial peptides. The protein is UDP-4-amino-4-deoxy-L-arabinose--oxoglutarate aminotransferase of Pseudomonas fluorescens (strain ATCC BAA-477 / NRRL B-23932 / Pf-5).